A 261-amino-acid chain; its full sequence is MTALPSPDRPRILVANDDGIFSPGIKALALALADVGDVVVVAPDVEQSAVGHGITIRRPLRFKHTASAGFGTLPAYRVDGTPADCVVLGVHLLGRPDLVVSGINLGSNLGDDLTHSGTVAAAIEGLALGLPSIAFSQQGNGGGEYSFTAGAAYAARLARAVLAKGLPPRVLLNVNFPAGLPRGVRITKVGEHRWEDSIITRHDPEGREYHWVAGQSRAADAHDPDTDYGAVQAGYVSVTPVRLDLTARDLLGELAGYVPEI.

A divalent metal cation-binding residues include D17, D18, S48, and N104.

The protein belongs to the SurE nucleotidase family. Requires a divalent metal cation as cofactor.

The protein localises to the cytoplasm. The catalysed reaction is a ribonucleoside 5'-phosphate + H2O = a ribonucleoside + phosphate. Nucleotidase that shows phosphatase activity on nucleoside 5'-monophosphates. The protein is 5'-nucleotidase SurE of Deinococcus geothermalis (strain DSM 11300 / CIP 105573 / AG-3a).